A 314-amino-acid chain; its full sequence is tRNA-cytidine(32) 2-sulfurtransferase (314 aa).

The short motif at 39 to 44 (SGGKDS) is the PP-loop motif element. Positions 114, 117, and 205 each coordinate [4Fe-4S] cluster.

Belongs to the TtcA family. Homodimer. Mg(2+) serves as cofactor. It depends on [4Fe-4S] cluster as a cofactor.

Its subcellular location is the cytoplasm. The catalysed reaction is cytidine(32) in tRNA + S-sulfanyl-L-cysteinyl-[cysteine desulfurase] + AH2 + ATP = 2-thiocytidine(32) in tRNA + L-cysteinyl-[cysteine desulfurase] + A + AMP + diphosphate + H(+). Its pathway is tRNA modification. Catalyzes the ATP-dependent 2-thiolation of cytidine in position 32 of tRNA, to form 2-thiocytidine (s(2)C32). The sulfur atoms are provided by the cysteine/cysteine desulfurase (IscS) system. In Cupriavidus necator (strain ATCC 17699 / DSM 428 / KCTC 22496 / NCIMB 10442 / H16 / Stanier 337) (Ralstonia eutropha), this protein is tRNA-cytidine(32) 2-sulfurtransferase.